The primary structure comprises 419 residues: Phospho-N-acetylmuramoyl-pentapeptide-transferase (419 aa).

10 helical membrane-spanning segments follow: residues 22-42 (YVSF…TAIG), 72-92 (TPTM…LLCA), 94-114 (LNNI…ALGF), 135-155 (IVGQ…SPDV), 210-230 (AAWL…SNGA), 238-258 (GLAA…AYMS), 266-286 (FLNI…AAFI), 303-323 (FMGD…AIII), 327-347 (LLIP…MLQV), and 396-416 (KIVV…IVTL).

This sequence belongs to the glycosyltransferase 4 family. MraY subfamily. The cofactor is Mg(2+).

Its subcellular location is the cell inner membrane. It catalyses the reaction UDP-N-acetyl-alpha-D-muramoyl-L-alanyl-gamma-D-glutamyl-meso-2,6-diaminopimeloyl-D-alanyl-D-alanine + di-trans,octa-cis-undecaprenyl phosphate = di-trans,octa-cis-undecaprenyl diphospho-N-acetyl-alpha-D-muramoyl-L-alanyl-D-glutamyl-meso-2,6-diaminopimeloyl-D-alanyl-D-alanine + UMP. It participates in cell wall biogenesis; peptidoglycan biosynthesis. Catalyzes the initial step of the lipid cycle reactions in the biosynthesis of the cell wall peptidoglycan: transfers peptidoglycan precursor phospho-MurNAc-pentapeptide from UDP-MurNAc-pentapeptide onto the lipid carrier undecaprenyl phosphate, yielding undecaprenyl-pyrophosphoryl-MurNAc-pentapeptide, known as lipid I. This Parabacteroides distasonis (strain ATCC 8503 / DSM 20701 / CIP 104284 / JCM 5825 / NCTC 11152) protein is Phospho-N-acetylmuramoyl-pentapeptide-transferase.